Here is a 500-residue protein sequence, read N- to C-terminus: NAD(P)H-quinone oxidoreductase chain 4, chloroplastic (500 aa).

The next 13 helical transmembrane spans lie at 4–24 (FPWLTIIVVFPIFAGSLIFFL), 35–55 (YTICICILELLLTTYAFCYHF), 87–107 (IGPILLTGFITTLATLAAWPV), 134–154 (LLLFFIMWELELIPVYLLLAM), 167–187 (FILYTAGGSVFLLMGVLGVAL), 208–228 (VLEIIFYIGFFIAFAVKSPII), 242–262 (HYSTCMLLAGILLKMGAYGLI), 272–292 (AHSIFSPWLMIIGTIQIIYAA), 305–325 (IAYPSVSHMGFIIIGISSLTD), 330–350 (GALLQIISHGFIGAALFFLAG), 386–406 (LALPGMSGFVAELIVFFGIIT), 411–431 (LLIPKLLITFVMAIGIILTPI), and 462–482 (LFLSISIFLPVIGIGIYPDFV).

The protein belongs to the complex I subunit 4 family.

The protein localises to the plastid. The protein resides in the chloroplast thylakoid membrane. The catalysed reaction is a plastoquinone + NADH + (n+1) H(+)(in) = a plastoquinol + NAD(+) + n H(+)(out). The enzyme catalyses a plastoquinone + NADPH + (n+1) H(+)(in) = a plastoquinol + NADP(+) + n H(+)(out). The chain is NAD(P)H-quinone oxidoreductase chain 4, chloroplastic from Solanum tuberosum (Potato).